Consider the following 243-residue polypeptide: Interleukin-27 subunit alpha (243 aa).

The first 28 residues, 1 to 28, serve as a signal peptide directing secretion; sequence MGQTAGDLGWRLSLLLLPLLLVQAGVWG.

It belongs to the IL-6 superfamily. In terms of assembly, heterodimer with EBI3; not disulfide-linked. This heterodimer is known as interleukin IL-27. Post-translationally, O-glycosylated. Expressed in monocytes and in placenta.

It localises to the secreted. Its function is as follows. Associates with EBI3 to form the IL-27 interleukin, a heterodimeric cytokine which functions in innate immunity. IL-27 has pro- and anti-inflammatory properties, that can regulate T-helper cell development, suppress T-cell proliferation, stimulate cytotoxic T-cell activity, induce isotype switching in B-cells, and that has diverse effects on innate immune cells. Among its target cells are CD4 T-helper cells which can differentiate in type 1 effector cells (TH1), type 2 effector cells (TH2) and IL17 producing helper T-cells (TH17). It drives rapid clonal expansion of naive but not memory CD4 T-cells. It also strongly synergizes with IL-12 to trigger interferon-gamma/IFN-gamma production of naive CD4 T-cells, binds to the cytokine receptor WSX-1/TCCR which appears to be required but not sufficient for IL-27-mediated signal transduction. IL-27 potentiate the early phase of TH1 response and suppress TH2 and TH17 differentiation. It induces the differentiation of TH1 cells via two distinct pathways, p38 MAPK/TBX21- and ICAM1/ITGAL/ERK-dependent pathways. It also induces STAT1, STAT3, STAT4 and STAT5 phosphorylation and activates TBX21/T-Bet via STAT1 with resulting IL12RB2 up-regulation, an event crucial to TH1 cell commitment. It suppresses the expression of GATA3, the inhibitor TH1 cells development. In CD8 T-cells, it activates STATs as well as GZMB. IL-27 reveals to be a potent inhibitor of TH17 cell development and of IL-17 production. Indeed IL27 alone is also able to inhibit the production of IL17 by CD4 and CD8 T-cells. While IL-27 suppressed the development of pro-inflammatory Th17 cells via STAT1, it inhibits the development of anti-inflammatory inducible regulatory T-cells, iTreg, independently of STAT1. IL-27 also has an effect on cytokine production, it suppresses pro-inflammatory cytokine production such as IL2, IL4, IL5 and IL6 and activates suppressors of cytokine signaling such as SOCS1 and SOCS3. Apart from suppression of cytokine production, IL-27 also antagonizes the effects of some cytokines such as IL6 through direct effects on T-cells. Another important role of IL-27 is its antitumor activity as well as its antiangiogenic activity with activation of production of antiangiogenic chemokines such as IP-10/CXCL10 and MIG/CXCL9. In vein endothelial cells, it induces IRF1/interferon regulatory factor 1 and increase the expression of MHC class II transactivator/CIITA with resulting up-regulation of major histocompatibility complex class II. IL-27 also demonstrates antiviral activity with inhibitory properties on HIV-1 replication. The sequence is that of Interleukin-27 subunit alpha (IL27) from Homo sapiens (Human).